A 339-amino-acid polypeptide reads, in one-letter code: Terpene synthase 7 (339 aa).

The DDxx(x)D/E motif motif lies at 79 to 84; sequence DDFLES. Positions 219–227 match the NDxxSxxxD/E motif motif; the sequence is NDCASYAKE.

Belongs to the terpene synthase family.

It catalyses the reaction (2E,6E)-farnesyl diphosphate = (-)-beta-barbatene + diphosphate. Functionally, terpene synthase that converts its substrate farnesyl diphosphate (FPP) into the sesquiterpene beta-barbatene. This Dictyostelium discoideum (Social amoeba) protein is Terpene synthase 7.